Reading from the N-terminus, the 318-residue chain is Probable plastid-lipid-associated protein 1, chloroplastic (318 aa).

The transit peptide at 1–55 directs the protein to the chloroplast; the sequence is MATVPLFTQFPCKTLNPSSSNTKHQSKSPILLPINSINRRSEIGVSVHRPDFKIR. The residue at position 57 (Thr-57) is a Phosphothreonine.

Belongs to the PAP/fibrillin family. In terms of assembly, interacts (via N-terminus) with ABI2. Expressed in flower buds. Detected in tapetal cells, endothecium and connective in anthers and in subepidermal cells in filaments.

It localises to the plastid. The protein localises to the chloroplast. The protein resides in the plastoglobule. It is found in the chloroplast thylakoid. Functionally, probably involved in light/cold stress-related jasmonate (JA) biosynthesis. Contributes to the protection of photosystem II (PSII) against light stress. The polypeptide is Probable plastid-lipid-associated protein 1, chloroplastic (PAP1) (Arabidopsis thaliana (Mouse-ear cress)).